A 273-amino-acid chain; its full sequence is Soluble P-type ATPase-like phosphatase (273 aa).

D8 acts as the 4-aspartylphosphate intermediate in catalysis.

Belongs to the cation transport ATPase (P-type) (TC 3.A.3) family. Type IB subfamily. Mg(2+) is required as a cofactor.

Inhibited by orthovanadate. Functionally, most probably acts as a phosphatase in the cytosol. This chain is Soluble P-type ATPase-like phosphatase (patS), found in Methanocaldococcus jannaschii (strain ATCC 43067 / DSM 2661 / JAL-1 / JCM 10045 / NBRC 100440) (Methanococcus jannaschii).